A 479-amino-acid chain; its full sequence is Outer membrane protein OprJ (479 aa).

The first 19 residues, 1–19 (MRKPAFGVSALLIALTLGA), serve as a signal peptide directing secretion. Cysteine 20 carries the N-palmitoyl cysteine lipid modification. Cysteine 20 carries the S-diacylglycerol cysteine lipid modification. Positions 102–121 (LNAAATGNRQRQPADLSAGN) are disordered.

This sequence belongs to the outer membrane factor (OMF) (TC 1.B.17) family.

The protein localises to the cell outer membrane. In terms of biological role, channel-forming component of a multidrug resistance efflux pump. This is Outer membrane protein OprJ (oprJ) from Pseudomonas aeruginosa (strain ATCC 15692 / DSM 22644 / CIP 104116 / JCM 14847 / LMG 12228 / 1C / PRS 101 / PAO1).